A 790-amino-acid polypeptide reads, in one-letter code: Lysine biosynthesis regulatory protein LYS14 (790 aa).

Disordered regions lie at residues 1 to 50 (MFES…SCFE) and 72 to 157 (FNHK…YSRN). Low complexity predominate over residues 35-47 (SGSSFTNSGTSTS). Polar residues-rich tracts occupy residues 75 to 113 (KQMT…SEQD) and 120 to 142 (TISQ…TSTV). A DNA-binding region (zn(2)-C6 fungal-type) is located at residues 159-186 (CSECKRRRMKCDETKPTCWQCARLNRQC). The segment at 195–258 (KKRRTSNAQR…PKPITDNGKN (64 aa)) is disordered. Positions 222–239 (ARKRQHSSCKAEKKKKVR) are enriched in basic residues.

It localises to the nucleus. In terms of biological role, activates the transcription of lysine biosynthesis genes. This activation is dependent on the inducer alpha-aminoadipate semialdehyde and repressed by lysine. The sequence is that of Lysine biosynthesis regulatory protein LYS14 (LYS14) from Saccharomyces cerevisiae (strain ATCC 204508 / S288c) (Baker's yeast).